We begin with the raw amino-acid sequence, 113 residues long: U11-theraphotoxin-Hhn1s (113 aa).

Positions 1 to 21 (MNTVRVTFLLVFVLAVSLGQA) are cleaved as a signal peptide. Positions 22–74 (DKDENRMEMQEKTEQGKSYLDFAENLLLQKLEELEAKLLEEDSEESRNSRQKR) are excised as a propeptide. The disordered stretch occupies residues 61 to 83 (EEDSEESRNSRQKRCIGEGVPCD). Intrachain disulfides connect Cys-75-Cys-90, Cys-82-Cys-95, and Cys-89-Cys-110.

This sequence belongs to the neurotoxin 14 (magi-1) family. 01 (HNTX-16) subfamily. In terms of tissue distribution, expressed by the venom gland.

Its subcellular location is the secreted. In terms of biological role, probable ion channel inhibitor. The chain is U11-theraphotoxin-Hhn1s from Cyriopagopus hainanus (Chinese bird spider).